A 519-amino-acid chain; its full sequence is bZIP transcription factor 30 (519 aa).

5 disordered regions span residues 1-30 (MGGG…IPKH), 45-83 (FRHP…QPSS), 108-202 (TGAG…RKPE), 222-295 (VLNS…TGRH), and 315-339 (SSLK…NSSA). Pro residues predominate over residues 51–61 (GAPPPPIPPIS). Polar residues predominate over residues 149 to 173 (SDVTFGFSSMMSQNQKSPPLSSLER). Basic and acidic residues predominate over residues 187–202 (VKKEPREGFYKGRKPE). Low complexity-rich tracts occupy residues 244-268 (SRGS…SASG) and 317-329 (LKLP…KVSP). The segment covering 330-339 (TNSGEGNSSA) has biased composition (polar residues). The tract at residues 372–393 (KRVKRILANRVSAARSKERKTR) is basic motif. Positions 386-460 (RSKERKTRYM…SEKLNEEVQR (75 aa)) form a coiled coil. Positions 398-433 (LEHKVQTLQTEATTLSAQLTHLQRDSMGLTNQNSEL) are leucine-zipper. Residues 465 to 519 (IGEPNRRQSGSSSSESKMSLNPEMFQQLSISQLQHQQMQHSNQCSTMKAKHTSND) form a disordered region. Low complexity-rich tracts occupy residues 473 to 483 (SGSSSSESKMS) and 490 to 509 (QQLS…NQCS).

Interacts with WUS, HEC1, KNAT1, KNAT2, HAT1, BEL1, and NGA1. Expressed in inflorescence meristem, floral organ primordia, gynoecia, ovules and carpel margin meristem.

The protein localises to the nucleus. Its function is as follows. Transcription factor that acts as a repressor of reproductive development, meristem size and plant growth. Acts as a transcriptional repressor in inflorescence tissues. Interacts with well known regulators of meristem and gynoecium development such as WUS, HEC1, KNAT1, KNAT2, HAT1, BEL1 and NGA1. Acts as a positive regulator of JAG and OFP1 expression in developing gynoecia. In Arabidopsis thaliana (Mouse-ear cress), this protein is bZIP transcription factor 30.